We begin with the raw amino-acid sequence, 70 residues long: MAFLKKSLFLVLFLGMVSLSICEEEKRENEDEELQEDDEQSEMKRGLWSTIKNVGKEAAIAAGKAALGAL.

Residues 1–22 (MAFLKKSLFLVLFLGMVSLSIC) form the signal peptide. A propeptide spanning residues 23-43 (EEEKRENEDEELQEDDEQSEM) is cleaved from the precursor. A disordered region spans residues 25–44 (EKRENEDEELQEDDEQSEMK). The span at 30-40 (EDEELQEDDEQ) shows a compositional bias: acidic residues. Leucine 70 bears the Leucine amide mark.

Expressed by the skin glands.

Its subcellular location is the secreted. Functionally, has antibacterial activity against the Gram-negative bacteria E.coli and P.aeruginosa, and the Gram-positive bacteria S.aureus and M.luteus. Has antiprotozoal activity against L.amazonensis. No hemolytic activity. The chain is Dermaseptin-H3 from Pithecopus hypochondrialis (Orange-legged leaf frog).